Here is a 549-residue protein sequence, read N- to C-terminus: Undecaprenyl phosphate-alpha-4-amino-4-deoxy-L-arabinose arabinosyl transferase (549 aa).

The next 12 helical transmembrane spans lie at 9–29, 80–100, 112–132, 136–156, 176–196, 204–224, 256–276, 288–308, 312–332, 346–366, 376–396, and 402–422; these read LLLI…GLWI, LFGV…LAYL, SLAC…SGYA, PQFT…LDAG, FLTK…PYML, LLGY…PWAL, PWWF…GLLP, QAPV…FSLS, LPTY…HALV, NGLL…YLQL, FELF…LAQW, and AWAA…AAMP.

This sequence belongs to the glycosyltransferase 83 family.

The protein localises to the cell inner membrane. It carries out the reaction 4-amino-4-deoxy-alpha-L-arabinopyranosyl di-trans,octa-cis-undecaprenyl phosphate + lipid IVA = lipid IIA + di-trans,octa-cis-undecaprenyl phosphate.. The protein operates within lipopolysaccharide metabolism; 4-amino-4-deoxy-beta-L-arabinose-lipid A biosynthesis. Functionally, catalyzes the transfer of the L-Ara4N moiety of the glycolipid undecaprenyl phosphate-alpha-L-Ara4N to lipid A. The modified arabinose is attached to lipid A and is required for resistance to polymyxin and cationic antimicrobial peptides. The protein is Undecaprenyl phosphate-alpha-4-amino-4-deoxy-L-arabinose arabinosyl transferase of Pseudomonas aeruginosa (strain ATCC 15692 / DSM 22644 / CIP 104116 / JCM 14847 / LMG 12228 / 1C / PRS 101 / PAO1).